Consider the following 696-residue polypeptide: Probable transporter efuK (696 aa).

Residues 603-642 (SLNGGKMQGASDAKSKVEQGQRAMRKQDEQNGSKWEPVFF) form a disordered region. The segment covering 615-633 (AKSKVEQGQRAMRKQDEQN) has biased composition (basic and acidic residues).

It belongs to the OSBP family.

Its function is as follows. Probable transporter; part of the gene cluster that mediates the biosynthesis of enfumafungin, a glycosylated fernene-type triterpenoid with potent antifungal activity, mediated by its interaction with beta-1,3-glucan synthase and the fungal cell wall. Might be involved in transport of enfumafungin to and across organelle membranes. The polypeptide is Probable transporter efuK (Hormonema carpetanum).